A 272-amino-acid chain; its full sequence is MHFYIPPPPISGFWLGPLYVHMYSVFMLAGALVLFELTNRRFIVLTGNREFTAFAVTSLLIPVILGARLWHVVSHTQMYEHQPFYKVFAIWEGGLGFIGGVFSGLICFFVIAKIKKVPPFTFLDALAPGILAALCFARLGNYFNGEVFGTETTLPWGLKLSHEGFKDLNVEKYFHPIFLYEIILNVFIIVILLVLEKRVFVKTVFPKGSVFAAFLVLYGLGRFALEPMRYNLQQNSFGLDLNYVGAAAMIIVGVLIACRHTIASGKLRNSGD.

4 consecutive transmembrane segments (helical) span residues 15 to 35 (LGPLYVHMYSVFMLAGALVLF), 53 to 73 (AFAVTSLLIPVILGARLWHVV), 90 to 110 (IWEGGLGFIGGVFSGLICFFV), and 117 to 137 (VPPFTFLDALAPGILAALCFA). Arg138 is an a 1,2-diacyl-sn-glycero-3-phospho-(1'-sn-glycerol) binding site. A run of 3 helical transmembrane segments spans residues 174-194 (FHPIFLYEIILNVFIIVILLV), 199-219 (VFVKTVFPKGSVFAAFLVLYG), and 237-257 (FGLDLNYVGAAAMIIVGVLIA).

The protein belongs to the Lgt family.

It localises to the cell membrane. It carries out the reaction L-cysteinyl-[prolipoprotein] + a 1,2-diacyl-sn-glycero-3-phospho-(1'-sn-glycerol) = an S-1,2-diacyl-sn-glyceryl-L-cysteinyl-[prolipoprotein] + sn-glycerol 1-phosphate + H(+). Its pathway is protein modification; lipoprotein biosynthesis (diacylglyceryl transfer). In terms of biological role, catalyzes the transfer of the diacylglyceryl group from phosphatidylglycerol to the sulfhydryl group of the N-terminal cysteine of a prolipoprotein, the first step in the formation of mature lipoproteins. The polypeptide is Phosphatidylglycerol--prolipoprotein diacylglyceryl transferase (Tropheryma whipplei (strain Twist) (Whipple's bacillus)).